The following is a 239-amino-acid chain: EF-hand domain-containing protein D2 (239 aa).

The tract at residues 1–51 (MATDELASKLSRRLQMEDEGGEATEQPGLNGAAAAAAEAPDETAQALGSAD) is disordered. Position 2 is an N-acetylalanine (alanine 2). Serine 11 carries the post-translational modification Phosphoserine. A compositionally biased stretch (low complexity) spans 32-46 (AAAAAAEAPDETAQA). Residues serine 73 and serine 75 each carry the phosphoserine modification. The residue at position 82 (tyrosine 82) is a Phosphotyrosine. EF-hand domains lie at 91–126 (KQIKDMEKMFKQYDAGKDGFIDLMELKLMMEKLGAP) and 127–162 (QTHLGLKSMIQEVDEDFDSKLSFREFLLIFRKAAAG). Residues aspartate 104, aspartate 108, glutamate 115, aspartate 140, aspartate 142, aspartate 144, lysine 146, and glutamate 151 each contribute to the Ca(2+) site. Lysine 232 is modified (N6-acetyllysine).

As to quaternary structure, interacts with CASP9; with inactive form.

The protein resides in the membrane raft. May regulate B-cell receptor (BCR)-induced immature and primary B-cell apoptosis. Plays a role as negative regulator of the canonical NF-kappa-B-activating branch. Controls spontaneous apoptosis through the regulation of BCL2L1 abundance. This is EF-hand domain-containing protein D2 (Efhd2) from Rattus norvegicus (Rat).